The following is a 138-amino-acid chain: Putative pre-16S rRNA nuclease (138 aa).

It belongs to the YqgF nuclease family.

Its subcellular location is the cytoplasm. Functionally, could be a nuclease involved in processing of the 5'-end of pre-16S rRNA. In Geobacillus kaustophilus (strain HTA426), this protein is Putative pre-16S rRNA nuclease.